The chain runs to 611 residues: Protein KINASE OF THE OUTER CHLOROPLAST MEMBRANE 1 (611 aa).

Over 1 to 555 (MASKIIAGKP…LEDFHWAVRP (555 aa)) the chain is Cytoplasmic. In terms of domain architecture, Protein kinase spans 39–306 (LKLRHRIGRG…TDILLVLKSL (268 aa)). Residues 45–53 (IGRGPFGDV) and Lys-74 contribute to the ATP site. A helical transmembrane segment spans residues 556–572 (LLIAMGLLTAMKLGICV). At 573–611 (RKKIGRSKDGKQRDGSTGQGDCKIPDGKGSDKSKWLVFF) the chain is on the chloroplast intermembrane side. The interval 579-606 (SKDGKQRDGSTGQGDCKIPDGKGSDKSK) is disordered. A compositionally biased stretch (basic and acidic residues) spans 595–606 (KIPDGKGSDKSK).

The protein belongs to the protein kinase superfamily. Ser/Thr protein kinase family. Associates with the TOC complex containing, at least, translocons at the chloroplast envelope (e.g. TOCs and TICs such as TOC159, TOC75, TOC33 and TIC56).

It localises to the plastid. The protein localises to the chloroplast outer membrane. It catalyses the reaction L-seryl-[protein] + ATP = O-phospho-L-seryl-[protein] + ADP + H(+). The catalysed reaction is L-threonyl-[protein] + ATP = O-phospho-L-threonyl-[protein] + ADP + H(+). Its function is as follows. Serine/threonine protein kinase acting as a regulatory component of the plastid protein import machinery by phosphorylating import receptors (e.g. the A-domain of TOC159, TOC120 and TOC132). Supports preprotein import and contributes to efficient chloroplast biogenesis, thus being required for survival during de-etiolation. This chain is Protein KINASE OF THE OUTER CHLOROPLAST MEMBRANE 1, found in Arabidopsis thaliana (Mouse-ear cress).